We begin with the raw amino-acid sequence, 127 residues long: Small ribosomal subunit protein uS13 (127 aa).

The disordered stretch occupies residues 90-127; the sequence is RRHRQGLPVRGQRTRTNARTRRGRRLTVAGKKKTPAKK. Residues 101–127 are compositionally biased toward basic residues; it reads QRTRTNARTRRGRRLTVAGKKKTPAKK.

The protein belongs to the universal ribosomal protein uS13 family. Part of the 30S ribosomal subunit. Forms a loose heterodimer with protein S19. Forms two bridges to the 50S subunit in the 70S ribosome.

In terms of biological role, located at the top of the head of the 30S subunit, it contacts several helices of the 16S rRNA. In the 70S ribosome it contacts the 23S rRNA (bridge B1a) and protein L5 of the 50S subunit (bridge B1b), connecting the 2 subunits; these bridges are implicated in subunit movement. Contacts the tRNAs in the A and P-sites. The polypeptide is Small ribosomal subunit protein uS13 (Synechocystis sp. (strain ATCC 27184 / PCC 6803 / Kazusa)).